The primary structure comprises 82 residues: MSILGVSIECKKSSTLLTFLTVRKMTRVFNKFPDMAYYRGDCLKAVYVTMTYKNTKTGETDYTYLSNGGCLHTIVMGSMVDY.

The protein is Protein C14 of Homo sapiens (Human).